Here is a 955-residue protein sequence, read N- to C-terminus: Alpha-1,4 glucan phosphorylase L isozyme, chloroplastic/amyloplastic (955 aa).

A chloroplast-targeting transit peptide spans 1 to 43 (MSRLSGITPRARDDRSQFQNPRLEIAVPDRTAGLQRTKRTLLV). The segment at 522–550 (KVVTESEKDELEEKDTELEKDEDPVPAPI) is disordered. Positions 528 to 545 (EKDELEEKDTELEKDEDP) are enriched in acidic residues. Lysine 801 carries the post-translational modification N6-(pyridoxal phosphate)lysine.

This sequence belongs to the glycogen phosphorylase family. Requires pyridoxal 5'-phosphate as cofactor.

It localises to the plastid. It is found in the chloroplast. The protein localises to the amyloplast. The catalysed reaction is [(1-&gt;4)-alpha-D-glucosyl](n) + phosphate = [(1-&gt;4)-alpha-D-glucosyl](n-1) + alpha-D-glucose 1-phosphate. In terms of biological role, phosphorylase is an important allosteric enzyme in carbohydrate metabolism. Enzymes from different sources differ in their regulatory mechanisms and in their natural substrates. However, all known phosphorylases share catalytic and structural properties. In Ipomoea batatas (Sweet potato), this protein is Alpha-1,4 glucan phosphorylase L isozyme, chloroplastic/amyloplastic.